Reading from the N-terminus, the 208-residue chain is Thymidylate kinase (208 aa).

9–16 is an ATP binding site; the sequence is GGEGCGKS.

Belongs to the thymidylate kinase family.

The enzyme catalyses dTMP + ATP = dTDP + ADP. Its function is as follows. Phosphorylation of dTMP to form dTDP in both de novo and salvage pathways of dTTP synthesis. This is Thymidylate kinase from Dehalococcoides mccartyi (strain CBDB1).